Reading from the N-terminus, the 47-residue chain is Delta-actitoxin-Axm1g (47 aa).

Cystine bridges form between Cys-4–Cys-44, Cys-6–Cys-34, and Cys-27–Cys-45.

This sequence belongs to the sea anemone sodium channel inhibitory toxin family. Type I subfamily.

The protein resides in the secreted. It localises to the nematocyst. This is Delta-actitoxin-Axm1g from Anthopleura xanthogrammica (Giant green sea anemone).